Reading from the N-terminus, the 382-residue chain is MLSFMKIRRNPTRPVTIGSITIGDGHPIAVQSMTATKTQNIDATVEQAEALHARGAGVVRIAVDSDKDAEALAEIRKQTQANLAVDLQENFRLAEKVAPHVDKIRYNPGHLYHHARELTWQEKVRYLIDTAGSNNCAVRIGVNCGSVDPAKKEKYDHDDSITPMLESALEHCELVDSLGFHNFVVSLKDSDPSKVVQVNTLFAEKRPDVALHLGVTEAGMPPDGIIKTRIAFEQLIGKGIGDTVRVSLTLPNPRKPEEIDAGKQIVEDIHAGRVRSVVKFDDSKLNIISCPSCSRVENEAFIDLAAKVKEMTTFAQEYSITIAVMGCRVNGPGETDDADLGLWCGPAKVNLKRGPEALGAFGYDEILPKLKQELDDLIAAKQ.

[4Fe-4S] cluster contacts are provided by C290, C293, C327, and E334.

The protein belongs to the IspG family. [4Fe-4S] cluster is required as a cofactor.

It carries out the reaction (2E)-4-hydroxy-3-methylbut-2-enyl diphosphate + oxidized [flavodoxin] + H2O + 2 H(+) = 2-C-methyl-D-erythritol 2,4-cyclic diphosphate + reduced [flavodoxin]. Its pathway is isoprenoid biosynthesis; isopentenyl diphosphate biosynthesis via DXP pathway; isopentenyl diphosphate from 1-deoxy-D-xylulose 5-phosphate: step 5/6. Its function is as follows. Converts 2C-methyl-D-erythritol 2,4-cyclodiphosphate (ME-2,4cPP) into 1-hydroxy-2-methyl-2-(E)-butenyl 4-diphosphate. The sequence is that of 4-hydroxy-3-methylbut-2-en-1-yl diphosphate synthase (flavodoxin) from Rhodopirellula baltica (strain DSM 10527 / NCIMB 13988 / SH1).